The sequence spans 198 residues: Probable GTP-binding protein EngB (198 aa).

The region spanning 21–195 (NFSEVAFLGR…EDIIIDQTLG (175 aa)) is the EngB-type G domain. GTP contacts are provided by residues 29–36 (GRSNVGKS), 56–60 (GKTQL), 81–84 (DLPG), 151–154 (TKCD), and 174–176 (VSN). The Mg(2+) site is built by Ser36 and Thr58.

This sequence belongs to the TRAFAC class TrmE-Era-EngA-EngB-Septin-like GTPase superfamily. EngB GTPase family. Requires Mg(2+) as cofactor.

In terms of biological role, necessary for normal cell division and for the maintenance of normal septation. This chain is Probable GTP-binding protein EngB, found in Campylobacter jejuni subsp. jejuni serotype O:6 (strain 81116 / NCTC 11828).